Reading from the N-terminus, the 361-residue chain is Phosphoserine aminotransferase (361 aa).

Arg42 serves as a coordination point for L-glutamate. Pyridoxal 5'-phosphate contacts are provided by residues 76–77 (AR), Trp102, Thr153, Asp173, and Gln196. An N6-(pyridoxal phosphate)lysine modification is found at Lys197. 238 to 239 (NT) lines the pyridoxal 5'-phosphate pocket.

Belongs to the class-V pyridoxal-phosphate-dependent aminotransferase family. SerC subfamily. As to quaternary structure, homodimer. Pyridoxal 5'-phosphate serves as cofactor.

It localises to the cytoplasm. The enzyme catalyses O-phospho-L-serine + 2-oxoglutarate = 3-phosphooxypyruvate + L-glutamate. The catalysed reaction is 4-(phosphooxy)-L-threonine + 2-oxoglutarate = (R)-3-hydroxy-2-oxo-4-phosphooxybutanoate + L-glutamate. Its pathway is amino-acid biosynthesis; L-serine biosynthesis; L-serine from 3-phospho-D-glycerate: step 2/3. It participates in cofactor biosynthesis; pyridoxine 5'-phosphate biosynthesis; pyridoxine 5'-phosphate from D-erythrose 4-phosphate: step 3/5. In terms of biological role, catalyzes the reversible conversion of 3-phosphohydroxypyruvate to phosphoserine and of 3-hydroxy-2-oxo-4-phosphonooxybutanoate to phosphohydroxythreonine. In Yersinia enterocolitica serotype O:8 / biotype 1B (strain NCTC 13174 / 8081), this protein is Phosphoserine aminotransferase.